Consider the following 53-residue polypeptide: Rho GTPase-activating protein 6 (53 aa).

The protein localises to the cytoplasm. In terms of biological role, GTPase activator for the Rho-type GTPases by converting them to an inactive GDP-bound state. Could regulate the interactions of signaling molecules with the actin cytoskeleton. Promotes continuous elongation of cytoplasmic processes during cell motility and simultaneous retraction of the cell body changing the cell morphology. The sequence is that of Rho GTPase-activating protein 6 (arhgap6) from Takifugu rubripes (Japanese pufferfish).